The following is a 348-amino-acid chain: Probable tRNA pseudouridine synthase B (348 aa).

The Nucleophile role is filled by D93. Residues 260–335 (LKKIYILDSA…IAVDIERVFM (76 aa)) enclose the PUA domain.

Belongs to the pseudouridine synthase TruB family. Type 2 subfamily.

It catalyses the reaction uridine(55) in tRNA = pseudouridine(55) in tRNA. In terms of biological role, could be responsible for synthesis of pseudouridine from uracil-55 in the psi GC loop of transfer RNAs. This Nanoarchaeum equitans (strain Kin4-M) protein is Probable tRNA pseudouridine synthase B.